Consider the following 147-residue polypeptide: Cyanate hydratase (147 aa).

Active-site residues include Arg-88, Glu-91, and Ser-114.

The protein belongs to the cyanase family.

It catalyses the reaction cyanate + hydrogencarbonate + 3 H(+) = NH4(+) + 2 CO2. Functionally, catalyzes the reaction of cyanate with bicarbonate to produce ammonia and carbon dioxide. The sequence is that of Cyanate hydratase from Polynucleobacter asymbioticus (strain DSM 18221 / CIP 109841 / QLW-P1DMWA-1) (Polynucleobacter necessarius subsp. asymbioticus).